The following is a 251-amino-acid chain: Putative glutamine amidotransferase YLR126C (251 aa).

In terms of domain architecture, Glutamine amidotransferase type-1 spans Glu48 to Leu232. Active-site for GATase activity residues include Cys112, His198, and Glu200.

Its subcellular location is the cytoplasm. Functionally, may have a role in copper and iron homeostasis. In Saccharomyces cerevisiae (strain ATCC 204508 / S288c) (Baker's yeast), this protein is Putative glutamine amidotransferase YLR126C.